A 95-amino-acid polypeptide reads, in one-letter code: Co-chaperonin GroES (95 aa).

Belongs to the GroES chaperonin family. In terms of assembly, heptamer of 7 subunits arranged in a ring. Interacts with the chaperonin GroEL.

It is found in the cytoplasm. Its function is as follows. Together with the chaperonin GroEL, plays an essential role in assisting protein folding. The GroEL-GroES system forms a nano-cage that allows encapsulation of the non-native substrate proteins and provides a physical environment optimized to promote and accelerate protein folding. GroES binds to the apical surface of the GroEL ring, thereby capping the opening of the GroEL channel. This Beijerinckia indica subsp. indica (strain ATCC 9039 / DSM 1715 / NCIMB 8712) protein is Co-chaperonin GroES.